A 322-amino-acid polypeptide reads, in one-letter code: Protease HtpX homolog (322 aa).

Helical transmembrane passes span 19–39 (ILLI…CYLL) and 61–81 (FINL…IAYF). His165 is a Zn(2+) binding site. Residue Glu166 is part of the active site. His169 provides a ligand contact to Zn(2+). Helical transmembrane passes span 175–195 (VRLL…AQIA) and 216–236 (ILIL…ATLM). Glu245 contacts Zn(2+).

The protein belongs to the peptidase M48B family. It depends on Zn(2+) as a cofactor.

Its subcellular location is the cell inner membrane. The chain is Protease HtpX homolog from Bacteroides fragilis (strain ATCC 25285 / DSM 2151 / CCUG 4856 / JCM 11019 / LMG 10263 / NCTC 9343 / Onslow / VPI 2553 / EN-2).